The primary structure comprises 631 residues: Translation factor GUF1, mitochondrial (631 aa).

The N-terminal 19 residues, 1 to 19, are a transit peptide targeting the mitochondrion; sequence MFNRRLLRHVRYAFQQVRS. The region spanning 33 to 214 is the tr-type G domain; the sequence is ERYRNFSIVA…AIVDRIPPPT (182 aa). GTP contacts are provided by residues 42 to 49, 107 to 111, and 161 to 164; these read AHVDHGKS, DTPGH, and NKID.

Belongs to the TRAFAC class translation factor GTPase superfamily. Classic translation factor GTPase family. LepA subfamily.

The protein resides in the mitochondrion inner membrane. It carries out the reaction GTP + H2O = GDP + phosphate + H(+). Functionally, promotes mitochondrial protein synthesis. May act as a fidelity factor of the translation reaction, by catalyzing a one-codon backward translocation of tRNAs on improperly translocated ribosomes. Binds to mitochondrial ribosomes in a GTP-dependent manner. The chain is Translation factor GUF1, mitochondrial from Kluyveromyces lactis (strain ATCC 8585 / CBS 2359 / DSM 70799 / NBRC 1267 / NRRL Y-1140 / WM37) (Yeast).